The sequence spans 481 residues: Abl interactor 1 (481 aa).

Alanine 2 bears the N-acetylalanine mark. Positions 18-79 are required for binding to WASF1; it reads ALIESYQNLT…NNVLQLLDIQ (62 aa). The 63-residue stretch at 45–107 folds into the t-SNARE coiled-coil homology domain; the sequence is KALEETKAYT…DIHKEKVARR (63 aa). At tyrosine 53 the chain carries Phosphotyrosine. The tract at residues 158-285 is disordered; it reads AKHGNNQPAR…PGAAPGSQYG (128 aa). The span at 161-175 shows a compositional bias: polar residues; the sequence is GNNQPARTGTLSRTN. 2 positions are modified to phosphothreonine: threonine 174 and threonine 178. A phosphoserine mark is found at serine 183 and serine 187. Tyrosine 213 carries the post-translational modification Phosphotyrosine. Position 215 is a phosphothreonine (threonine 215). Serine 216, serine 222, and serine 225 each carry phosphoserine. Residues 222 to 235 are compositionally biased toward polar residues; sequence SQHSPGRTASLNQR. Composition is skewed to low complexity over residues 248 to 258 and 272 to 282; these read SRENSGSSSIG and GPAAPGAAPGS. Phosphoserine occurs at positions 292 and 296. 2 disordered regions span residues 318–348 and 361–392; these read AQPH…LTPQ and NIAD…PPPV. Composition is skewed to pro residues over residues 366 to 376 and 383 to 392; these read PTPPPPPPPDD and SPPPPPPPPV. Residues 419 to 478 enclose the SH3 domain; that stretch reads NYIEKVVAIYDYTKDKDDELSFKEGAIIYVIKKNDDGWFEGVCNRVTGLFPGNYVESIMH. Phosphotyrosine is present on tyrosine 428. Serine 439 carries the post-translational modification Phosphoserine. Residue threonine 480 is modified to Phosphothreonine.

The protein belongs to the ABI family. Interacts with ENAH, Abelson murine leukemia virus V-ABL, ABL1, STX1A, SNAP25, VAMP2, and through its N-terminus with WASF1. Part of a complex consisting of ABI1, STX1A and SNAP25. Part of a complex consisting of ABI1, EPS8 and SOS1. Interacts with EPS8, SOS1, SOS2, GRB2, SPTA1, and the first SH3 domain of NCK1. Component of the WAVE2 complex composed of ABI1, CYFIP1/SRA1, NCKAP1/NAP1 (NCKAP1l/HEM1 in hematopoietic cells) and WASF2/WAVE2. Interacts (via SH3 domain) with SHANK2 and SHANK3, but not SHANK1; the interaction is direct. Interacts with the heterodimer MYC:MAX; the interaction may enhance MYC:MAX transcriptional activity. Interacts with FNBP1L (via the SH3 domain), WASF2, and CDC42, but only in the presence of FNBP1L. In terms of processing, phosphorylated on tyrosine residues after serum stimulation or induction by v-Abl. Seems to be phosphorylated at Tyr-53 by ABL1, required for nuclear but not for synaptic localization. Widely expressed with highest levels in bone marrow, spleen, brain, testes, and embryonic brain. In adult brain prominently expressed in the neocortex, hippocampus and dentate gyrus.

The protein localises to the cytoplasm. It localises to the nucleus. The protein resides in the cell projection. Its subcellular location is the lamellipodium. It is found in the filopodium. The protein localises to the growth cone. It localises to the postsynaptic density. The protein resides in the cytoskeleton. Functionally, may act in negative regulation of cell growth and transformation by interacting with nonreceptor tyrosine kinases ABL1 and/or ABL2. In vitro, at least isoform 2 and isoform 4 suppress the transforming activity of Abelson murine leukemia virus (v-Abl) after overexpression in fibroblasts. May play a role in regulation EGF-induced Erk pathway activation. Involved in cytoskeletal reorganization and EGFR signaling. Together with EPS8 participates in transduction of signals from Ras to Rac. In vitro, a trimeric complex of ABI1, EPS8 and SOS1 exhibits Rac specific guanine nucleotide exchange factor (GEF) activity and ABI1 seems to act as an adapter in the complex. Regulates ABL1/c-Abl-mediated phosphorylation of ENAH. Recruits WASF1 to lamellipodia and there seems to regulate WASF1 protein level. In brain, seems to regulate the dendritic outgrowth and branching as well as to determine the shape and number of synaptic contacts of developing neurons. In Mus musculus (Mouse), this protein is Abl interactor 1.